The sequence spans 453 residues: GTPase Der (453 aa).

EngA-type G domains are found at residues 3–167 (PIIV…ISEK) and 187–360 (IKVA…EDSK). Residues 9–16 (GRTNVGKS), 57–61 (DTAGL), 119–122 (NKID), 193–200 (GRPNVGKS), 240–244 (DTAGA), and 305–308 (NKCD) each bind GTP. The KH-like domain maps to 361-445 (RKISTSTLIR…PIQIQFKDNE (85 aa)).

Belongs to the TRAFAC class TrmE-Era-EngA-EngB-Septin-like GTPase superfamily. EngA (Der) GTPase family. As to quaternary structure, associates with the 50S ribosomal subunit.

GTPase that plays an essential role in the late steps of ribosome biogenesis. This chain is GTPase Der, found in Buchnera aphidicola subsp. Acyrthosiphon pisum (strain Tuc7).